The following is a 427-amino-acid chain: Enolase (427 aa).

Glutamine 163 contacts (2R)-2-phosphoglycerate. Glutamate 205 functions as the Proton donor in the catalytic mechanism. The Mg(2+) site is built by aspartate 242, glutamate 285, and aspartate 312. Residues lysine 337, arginine 366, serine 367, and lysine 388 each coordinate (2R)-2-phosphoglycerate. Lysine 337 acts as the Proton acceptor in catalysis.

It belongs to the enolase family. Mg(2+) serves as cofactor.

It localises to the cytoplasm. Its subcellular location is the secreted. The protein resides in the cell surface. It carries out the reaction (2R)-2-phosphoglycerate = phosphoenolpyruvate + H2O. It functions in the pathway carbohydrate degradation; glycolysis; pyruvate from D-glyceraldehyde 3-phosphate: step 4/5. Its function is as follows. Catalyzes the reversible conversion of 2-phosphoglycerate (2-PG) into phosphoenolpyruvate (PEP). It is essential for the degradation of carbohydrates via glycolysis. The sequence is that of Enolase from Leptothrix cholodnii (strain ATCC 51168 / LMG 8142 / SP-6) (Leptothrix discophora (strain SP-6)).